A 385-amino-acid chain; its full sequence is MVHQSEMENYNIGQASIEEVSDPAYKGAKIVVIGVGGGGSNMIKHLVEYGVHQDVTPIATNTDGQHLKNNPAPVKILLGKESTGGLGAGGIPDIGRKAAEESANEIKEAIKDAKLVIISTGLGGGTGTGATPTIVKIAKEVGALTIAIVTKPFKYEGNQKRKRAEEGLKELEQSSDSILVIPNDKILLTMKKNASTTECYREVDDVLVRAVSGISTIITKPGNINVDFADLKSALGFKGFALMGIGEATGEESAKLAVQNAIQSPLLDDASIEGAKSIIVFFEHHPDYPMMAYSQACDFIQDQAHQDVDVKFGQHTSDNIPIDHVRVTIIATGAERNSGGASLESIATPSQPVVKQTRKVGNGEYLKIPTEEELSIPTTMRIQQD.

GTP is bound by residues 37–41 (GGGSN), 125–127 (GTG), Glu156, Lys160, and Asp204.

It belongs to the FtsZ family. In terms of assembly, homodimer. Polymerizes to form a dynamic ring structure in a strictly GTP-dependent manner. Interacts directly with several other division proteins.

It is found in the cytoplasm. Functionally, essential cell division protein that forms a contractile ring structure (Z ring) at the future cell division site. The regulation of the ring assembly controls the timing and the location of cell division. One of the functions of the FtsZ ring is to recruit other cell division proteins to the septum to produce a new cell wall between the dividing cells. Binds GTP and shows GTPase activity. The protein is Cell division protein FtsZ of Helicobacter pylori (strain ATCC 700392 / 26695) (Campylobacter pylori).